The primary structure comprises 209 residues: Uracil phosphoribosyltransferase (209 aa).

5-phospho-alpha-D-ribose 1-diphosphate-binding positions include arginine 79, arginine 104, and 131-139 (DPMLATGGS). Uracil contacts are provided by residues isoleucine 194 and 199–201 (GDA). A 5-phospho-alpha-D-ribose 1-diphosphate-binding site is contributed by aspartate 200.

It belongs to the UPRTase family. Mg(2+) serves as cofactor.

The enzyme catalyses UMP + diphosphate = 5-phospho-alpha-D-ribose 1-diphosphate + uracil. Its pathway is pyrimidine metabolism; UMP biosynthesis via salvage pathway; UMP from uracil: step 1/1. Allosterically activated by GTP. Its function is as follows. Catalyzes the conversion of uracil and 5-phospho-alpha-D-ribose 1-diphosphate (PRPP) to UMP and diphosphate. The sequence is that of Uracil phosphoribosyltransferase from Geobacillus kaustophilus (strain HTA426).